Consider the following 303-residue polypeptide: Ribonucleoside-diphosphate reductase small subunit (303 aa).

Residues Asp-60, Glu-90, and His-93 each contribute to the Fe cation site. The active site involves Tyr-97. A helical membrane pass occupies residues Leu-147–Leu-167. Glu-153, Glu-187, and His-190 together coordinate Fe cation.

It belongs to the ribonucleoside diphosphate reductase small chain family. Heterotetramer composed of a homodimer of the large subunit (R1) and a homodimer of the small subunit (R2). Larger multisubunit protein complex are also active, composed of (R1)n(R2)n. Fe cation serves as cofactor.

It is found in the host membrane. The catalysed reaction is a 2'-deoxyribonucleoside 5'-diphosphate + [thioredoxin]-disulfide + H2O = a ribonucleoside 5'-diphosphate + [thioredoxin]-dithiol. Functionally, ribonucleoside-diphosphate reductase holoenzyme provides the precursors necessary for viral DNA synthesis. Allows virus growth in non-dividing cells, as well as reactivation from latency in infected hosts. Catalyzes the biosynthesis of deoxyribonucleotides from the corresponding ribonucleotides. This is Ribonucleoside-diphosphate reductase small subunit from Suid herpesvirus 1 (strain Kaplan) (SuHV-1).